The following is a 258-amino-acid chain: Serine/arginine-rich splicing factor x16 (258 aa).

The RRM domain maps to 8 to 81 (RKVYVGDLGN…RRARVELSTG (74 aa)). Disordered stretches follow at residues 81–113 (GKYARSGGGGGGGGGGGGGGGLGGRDRGGGGRG) and 130–258 (CRER…VSRD). Residues 86–103 (SGGGGGGGGGGGGGGGLG) show a composition bias toward gly residues. Basic and acidic residues predominate over residues 104–113 (GRDRGGGGRG). A CCHC-type zinc finger spans residues 116–132 (KCYECGGRGHFARHCRE). 2 stretches are compositionally biased toward basic residues: residues 130–141 (CRERKARQRRRS) and 149–166 (STSRRRRTRSKSGTRSRS). Composition is skewed to basic and acidic residues over residues 180-197 (NGRDENGSASRYSDHERN) and 210-221 (RRYEDEDDDRVR). Composition is skewed to low complexity over residues 231 to 240 (RSASPAVRRG) and 249 to 258 (SSASRSVSRD).

Interacts (via Arg/Ser-rich region) with Alsin2/CG7564, Rbp1 and Doa (via N-terminus). In terms of processing, highly phosphorylated. May be phosphorylated by the serine/threonine-protein kinase Doa.

It is found in the nucleus. Serine/arginine-rich splicing factor (SR protein) involved in differential exon usage during RNA transcript processing, probably by binding exonic splicing enhancer elements and recruiting components of the splicing machinery. Binds RNA stem-loop structures with consensus sequence 5'-CCGUNUNKNW-3'. Regulator of genes involved in lipid and carbohydrate metabolism, the immune response and the response to xenobiotics. The polypeptide is Serine/arginine-rich splicing factor x16 (Drosophila melanogaster (Fruit fly)).